Here is a 7124-residue protein sequence, read N- to C-terminus: Replicase polyprotein 1ab (7124 aa).

The disordered stretch occupies residues 25-45; the sequence is SEKLGSPERSEEDGFCPSAAQ. Residues 54-196 enclose the CoV Nsp1 globular domain; the sequence is LINHVRVDCS…PWSILLRKGG (143 aa). The BetaCoV Nsp1 C-terminal domain maps to 217-247; it reads FNVEDACEEVHLNPKGKYSRKAYALLKGYRG. Residues 251 to 511 form the CoV Nsp2 N-terminal domain; that stretch reads ILFLDQYGCD…TDAICRSLYM (261 aa). Zn(2+) is bound by residues Cys390, Cys395, Cys411, and Cys414. The interval 390-414 is C4; sequence CCGDACDFRGWVPGNMMDGFLCPGC. The 189-residue stretch at 518-706 folds into the CoV Nsp2 middle domain; sequence CGNLEQRAIL…VDKFKVFFKV (189 aa). The CoV Nsp2 C-terminal domain occupies 726 to 832; sequence SNRVCLAGCK…LDQCWRFPCA (107 aa). One can recognise a Ubiquitin-like 1 domain in the interval 834-946; sequence KKVEFNDKPK…MYCSFSAPDD (113 aa). Residues 1031 to 1268 enclose the Peptidase C16 1 domain; sequence AFDAIYSEAL…IAQLYGSCIT (238 aa). Residue Cys1068 is the For PL1-PRO activity of the active site. Positions 1145, 1148, 1171, and 1173 each coordinate Zn(2+). The segment at 1145-1173 adopts a C4-type 1 zinc-finger fold; it reads CLKCDMDLKLQGLDAMFFYGDVVSHVCKC. Catalysis depends on for PL1-PRO activity residues His1219 and Asp1230. Residues 1269–1429 form the Macro domain; sequence PNVCFVKGDV…VIEKCQVTSI (161 aa). The DPUP domain occupies 1484 to 1556; the sequence is DDARVFVQAH…VSQIRALLAN (73 aa). A Ubiquitin-like 2 domain is found at 1555 to 1610; sequence ANKVDVLCTVDGVNFRSCCVAEGEVFGKTLGSVFCDGINVTKVRCSAIHKGKVFFQ. In terms of domain architecture, Peptidase C16 2 spans 1625–1884; that stretch reads AFGFDEPQLL…CVEYNPDLSQ (260 aa). Cys1663 (for PL2-PRO activity) is an active-site residue. Zn(2+)-binding residues include Cys1741, Cys1743, Cys1775, and Cys1777. Residues 1741 to 1777 form a C4-type 2 zinc finger; the sequence is CKCGVKQEQRKGVDAVMHFGTLDKGDLAKGYTIACTC. Active-site for PL2-PRO activity residues include His1820 and Asp1834. The region spanning 1898–1999 is the Nucleic acid-binding domain; it reads IKAQFRTFEK…TYFNRPSVVC (102 aa). Positions 2053–2202 constitute a G2M domain; it reads QVVSGFLSDL…TDNKVIYTTE (150 aa). The next 2 helical transmembrane spans lie at 2232-2252 and 2260-2280; these read FFLV…NVIL and IGFF…TFGI. Positions 2232–2408 are HD1; that stretch reads FFLVATVFLL…FTLLRFYIVV (177 aa). A 3Ecto domain is found at 2268–2329; that stretch reads GQIVAWVKTT…AINVVQHVVD (62 aa). 2 disulfide bridges follow: Cys2284–Cys2308 and Cys2299–Cys2305. 2 helical membrane-spanning segments follow: residues 2346–2366 and 2388–2408; these read LVIG…LIGM and FFVF…YIVV. The tract at residues 2416–2506 is Y1; it reads CLCRHVMYGC…ELKRPVNPTD (91 aa). Positions 2416-2783 constitute a CoV Nsp3 Y domain; sequence CLCRHVMYGC…LTTPFSLKGG (368 aa). Positions 2420, 2425, 2430, 2433, 2466, 2469, 2473, and 2476 each coordinate Zn(2+). The interval 2420–2433 is ZF1; the sequence is HVMYGCSRPGCLFC. Residues 2466 to 2476 form a ZF2 region; it reads CAKHQWNCLNC. The interval 2507–2599 is Y2; sequence SAYYLVTEVK…LVEKKLITTA (93 aa). The tract at residues 2507–2783 is coV-Y; the sequence is SAYYLVTEVK…LTTPFSLKGG (277 aa). The segment at 2600-2682 is Y3; that stretch reads NTGLSVSQTM…KSIMSAVNAG (83 aa). The segment at 2683-2783 is Y4; that stretch reads VDFTDESCNN…LTTPFSLKGG (101 aa). The next 7 helical transmembrane spans lie at 2789-2809, 2869-2889, 3042-3062, 3064-3084, 3096-3116, 3123-3143, and 3148-3168; these read VLQW…ALMP, ACPV…FNVP, AFDL…FFAL, ASSV…YYLI, VVVI…VFQV, LYAC…SVVM, and LVMY…AVVV. An HD2 region spans residues 2789 to 3168; the sequence is VLQWLFVVNL…FCIIYVAVVV (380 aa). In terms of domain architecture, Nsp4C spans 3182–3279; the sequence is LGTEVRSDGT…TASVTTSFLQ (98 aa). Positions 3280 to 3582 constitute a Peptidase C30 domain; it reads SGIVKMVFPT…YQQLAGVKLQ (303 aa). Catalysis depends on for 3CL-PRO activity residues His3320 and Cys3424. The interval 3525–3808 is HD3; that stretch reads LVLDALASMT…VCCCYWGVLS (284 aa). A run of 7 helical transmembrane segments spans residues 3591-3611, 3621-3641, 3647-3667, 3690-3710, 3717-3737, 3744-3764, and 3788-3808; these read GTCC…SAFV, THML…MLLV, YLTM…YLVV, TYMD…FVTM, VFSV…WYFG, VLLF…LSLA, and LVLL…GVLS. Positions 3870 to 3958 constitute a RdRp Nsp7 cofactor domain; that stretch reads SRLTDVKCVN…DYVRDSTVLQ (89 aa). The 197-residue stretch at 3959-4155 folds into the RdRp Nsp8 cofactor domain; it reads ALQSEFVNMA…HNEVSSVVLQ (197 aa). One can recognise a Nsp9 ssRNA-binding domain in the interval 4156–4265; the sequence is NNELMPQKLR…GTLSSTVRLQ (110 aa). In terms of domain architecture, ExoN/MTase coactivator spans 4266 to 4403; sequence AGTATEYASN…CVGTGSQFQS (138 aa). 8 residues coordinate Zn(2+): Cys4339, Cys4342, His4348, Cys4355, Cys4381, Cys4384, Cys4392, and Cys4394. 2 zinc fingers span residues 4339–4355 and 4381–4394; these read CIYC…DGLC and CQVC…SCSC. Residues 4408–4663 enclose the NiRAN domain; the sequence is FLNRVRGTSV…DSELFINGTY (256 aa). 2 residues coordinate Mn(2+): Asn4611 and Asp4620. In terms of domain architecture, Nsp12 Interface spans 4664–4762; sequence REFDLVQYDF…MNMDVDTHRY (99 aa). Residues His4693, Cys4699, Cys4704, Cys4708, and Cys4885 each contribute to the Zn(2+) site. The region spanning 4763–5330 is the Nsp12 RNA-dependent RNA polymerase domain; sequence RLSLKDLLLY…NMYLRSAVMQ (568 aa). The rdRp Fingers N-ter stretch occupies residues 4765–4979; sequence SLKDLLLYAA…HQKCLKSIAA (215 aa). Positions 4980–5018 are rdRp Palm N-ter; the sequence is TRGVPVVIGTTKFYGGWDDMLRRLIKDVDSPVLMGWDYP. In terms of domain architecture, RdRp catalytic spans 5010–5172; sequence PVLMGWDYPK…CYNSEFASKG (163 aa). The interval 5019-5077 is rdRp Fingers C-ter; it reads KCDRAMPNILRIISSLVLARKHDSCCSHTDRFYRLANECAQVLSEIVMCGGCYYVKPGG. Zn(2+) contacts are provided by His5040, Cys5043, and Cys5044. The segment at 5078–5213 is rdRp Palm C-ter; that stretch reads TSSGDATTAF…EKGPHEFCSQ (136 aa). Catalysis depends on residues Ser5157, Asp5158, and Asp5159. Residues 5214-5330 are rdRp Thumb; sequence HTMLVKMDGD…NMYLRSAVMQ (117 aa). A CV ZBD domain is found at 5331 to 5443; the sequence is SVGACVVCSS…EDFNKIASCK (113 aa). Cys5335, Cys5338, Cys5346, Cys5349, Cys5356, Cys5359, His5363, His5369, Cys5380, Cys5385, Cys5402, and His5405 together coordinate Zn(2+). In terms of domain architecture, (+)RNA virus helicase ATP-binding spans 5586–5767; the sequence is SVPETFQNNV…MCCLGPDIFL (182 aa). Residue 5611-5618 coordinates ATP; sequence GPPGTGKS. Residues 5768–5937 form the (+)RNA virus helicase C-terminal domain; sequence GTCYRCPKEI…RLQCTTNLFK (170 aa). The ExoN domain occupies 6001–6216; the sequence is LFITRDEAIR…RCLAVHDCFC (216 aa). Active-site residues include Asp6019, Glu6021, and Glu6120. The Zn(2+) site is built by Cys6136, Cys6139, Cys6155, His6158, His6186, Cys6190, and His6193. Catalysis depends on residues His6197 and Asp6202. Cys6208 is a binding site for Zn(2+). Residues 6225 to 6451 enclose the N7-MTase domain; sequence YPIISNEVSV…NLWNTFTRLQ (227 aa). 6260–6266 contributes to the S-adenosyl-L-methionine binding site; it reads DIGNPKG. A gpppA-binding region spans residues 6338–6352; it reads CNGGSLYVNKHAFHT. Zn(2+) is bound by residues Cys6376, Cys6397, Cys6408, and His6411. In terms of domain architecture, Nsp15 N-terminal oligomerization spans 6452–6512; that stretch reads SLENVVYNLV…NVAVELFAKR (61 aa). In terms of domain architecture, AV-Nsp11N/CoV-Nsp15M spans 6513 to 6633; the sequence is SIRPHPELKL…FAMRRDGDDV (121 aa). Residues 6683–6822 form the NendoU domain; the sequence is APRSEMEKDF…NEEKVMTFYP (140 aa). Catalysis depends on residues His6713, His6728, Lys6768, Lys6871, Asp6955, Lys6995, and Glu7028. Residues 6827–7121 enclose the Nidovirus-type SAM-dependent 2'-O-MTase domain; the sequence is AADWKPGYVM…KEVFVGDSLV (295 aa).

Belongs to the coronaviruses polyprotein 1ab family. As to quaternary structure, interacts with host PHB and PHB2. Interacts with papain-like protease nsp3 and non-structural protein 6. In terms of assembly, monomer. Homodimer. Only the homodimer shows catalytic activity. As to quaternary structure, interacts with nsp8 and nsp12 to form the replication-transcription complex (RTC): nsp12, nsp7, two subunits of nsp8, and up to two subunits of nsp13. Interacts with nsp7, nsp13 and nsp12 to form the replication-transcription complex (RTC): nsp12, nsp7, two subunits of nsp8, and up to two subunits of nsp13. In terms of assembly, interacts with nsp12. As to quaternary structure, interacts with proofreading exoribonuclease nsp14 and 2'-O-methyltransferase nsp16; these interactions enhance nsp14 and nsp16 enzymatic activities. Interacts with nsp7 and nsp8 to form the replication-transcription complex (RTC): nsp12, nsp7, two subunits of nsp8, and up to two subunits of nsp13. Interacts with nsp9. In terms of assembly, interacts with nsp8 to form the replication-transcription complex (RTC): nsp12, nsp7, two subunits of nsp8, and up to two subunits of nsp13. Mn(2+) serves as cofactor. Requires Mg(2+) as cofactor. Post-translationally, specific enzymatic cleavages in vivo by its own proteases yield mature proteins. 3CL-PRO and PL-PRO proteinases are autocatalytically processed.

It localises to the host membrane. The protein resides in the host cytoplasm. Its subcellular location is the host perinuclear region. It is found in the host endoplasmic reticulum-Golgi intermediate compartment. The catalysed reaction is RNA(n) + a ribonucleoside 5'-triphosphate = RNA(n+1) + diphosphate. The enzyme catalyses ATP + H2O = ADP + phosphate + H(+). It carries out the reaction Thiol-dependent hydrolysis of ester, thioester, amide, peptide and isopeptide bonds formed by the C-terminal Gly of ubiquitin (a 76-residue protein attached to proteins as an intracellular targeting signal).. It catalyses the reaction a 5'-end (N(7)-methyl 5'-triphosphoguanosine)-ribonucleoside in mRNA + S-adenosyl-L-methionine = a 5'-end (N(7)-methyl 5'-triphosphoguanosine)-(2'-O-methyl-ribonucleoside) in mRNA + S-adenosyl-L-homocysteine + H(+). The catalysed reaction is uridylyl-uridylyl-ribonucleotide-RNA = a 3'-end uridylyl-2',3'-cyclophospho-uridine-RNA + a 5'-end dephospho-ribonucleoside-RNA. The enzyme catalyses a 5'-end diphospho-ribonucleoside in mRNA + GTP + H(+) = a 5'-end (5'-triphosphoguanosine)-ribonucleoside in mRNA + diphosphate. It carries out the reaction a 5'-end (5'-triphosphoguanosine)-ribonucleoside in mRNA + S-adenosyl-L-methionine = a 5'-end (N(7)-methyl 5'-triphosphoguanosine)-ribonucleoside in mRNA + S-adenosyl-L-homocysteine. The replicase polyprotein of coronaviruses is a multifunctional protein: it contains the activities necessary for the transcription of negative stranded RNA, leader RNA, subgenomic mRNAs and progeny virion RNA as well as proteinases responsible for the cleavage of the polyprotein into functional products. Functionally, inhibits host translation by interacting with the 40S ribosomal subunit. The nsp1-40S ribosome complex further induces an endonucleolytic cleavage near the 5'UTR of host mRNAs, targeting them for degradation. Viral mRNAs are not susceptible to nsp1-mediated endonucleolytic RNA cleavage thanks to the presence of a 5'-end leader sequence and are therefore protected from degradation. By suppressing host gene expression, nsp1 facilitates efficient viral gene expression in infected cells and evasion from host immune response. In terms of biological role, may play a role in the modulation of host cell survival signaling pathway by interacting with host PHB and PHB2. Indeed, these two proteins play a role in maintaining the functional integrity of the mitochondria and protecting cells from various stresses. Its function is as follows. Responsible for the cleavages located at the N-terminus of the replicase polyprotein. In addition, PL-PRO possesses a deubiquitinating/deISGylating activity and processes both 'Lys-48'- and 'Lys-63'-linked polyubiquitin chains from cellular substrates. Participates together with nsp4 in the assembly of virally-induced cytoplasmic double-membrane vesicles necessary for viral replication. Antagonizes innate immune induction of type I interferon by blocking the phosphorylation, dimerization and subsequent nuclear translocation of host IRF3. Also prevents host NF-kappa-B signaling. Participates in the assembly of virally-induced cytoplasmic double-membrane vesicles necessary for viral replication. Functionally, cleaves the C-terminus of replicase polyprotein at 11 sites. Recognizes substrates containing the core sequence [ILMVF]-Q-|-[SGACN]. Also able to bind an ADP-ribose-1''-phosphate (ADRP). In terms of biological role, plays a role in the initial induction of autophagosomes from host endoplasmic reticulum. Later, limits the expansion of these phagosomes that are no longer able to deliver viral components to lysosomes. Its function is as follows. Forms a hexadecamer with nsp8 (8 subunits of each) that may participate in viral replication by acting as a primase. Alternatively, may synthesize substantially longer products than oligonucleotide primers. Forms a hexadecamer with nsp7 (8 subunits of each) that may participate in viral replication by acting as a primase. Alternatively, may synthesize substantially longer products than oligonucleotide primers. Functionally, forms a primer, NSP9-pU, which is utilized by the polymerase for the initiation of RNA chains. Interacts with ribosome signal recognition particle RNA (SRP). Together with NSP8, suppress protein integration into the cell membrane, thereby disrupting host immune defenses. In terms of biological role, plays a pivotal role in viral transcription by stimulating both nsp14 3'-5' exoribonuclease and nsp16 2'-O-methyltransferase activities. Therefore plays an essential role in viral mRNAs cap methylation. Its function is as follows. RNA-directed RNA polymerase that catalyzes the transcription of viral genomic and subgenomic RNAs. Acts in complex with nsp7 and nsp8 to transcribe both the minus and positive strands of genomic RNA. The kinase-like NiRAN domain of NSP12 attaches one or more nucleotides to the amino terminus of NSP9, forming a covalent RNA-protein intermediate that serves as transcription/replication primer. Subgenomic RNAs (sgRNAs) are formed by discontinuous transcription: The polymerase has the ability to pause at transcription-regulating sequences (TRS) and jump to the leader TRS, resulting in a major deletion. This creates a series of subgenomic RNAs that are replicated, transcribed and translated. In addition, Nsp12 is a subunit of the viral RNA capping enzyme that catalyzes the RNA guanylyltransferase reaction for genomic and sub-genomic RNAs. Subsequently, the NiRAN domain transfers RNA to GDP, and forms the core cap structure GpppA-RNA. Multi-functional protein with a zinc-binding domain in N-terminus displaying RNA and DNA duplex-unwinding activities with 5' to 3' polarity. Activity of helicase is dependent on magnesium. Functionally, plays a role in viral RNA synthesis through two distinct activities. The N7-guanine methyltransferase activity plays a role in the formation of the cap structure GpppA-RNA. The proofreading exoribonuclease reduces the sensitivity of the virus to RNA mutagens during replication. This activity acts on both ssRNA and dsRNA in a 3'-5' direction. In terms of biological role, plays a role in viral transcription/replication and prevents the simultaneous activation of host cell dsRNA sensors, such as MDA5/IFIH1, OAS, and PKR. Acts by degrading the 5'-polyuridines generated during replication of the poly(A) region of viral genomic and subgenomic RNAs. Catalyzes a two-step reaction in which a 2'3'-cyclic phosphate (2'3'-cP) is first generated by 2'-O transesterification, which is then hydrolyzed to a 3'-phosphate (3'-P). If not degraded, poly(U) RNA would hybridize with poly(A) RNA tails and activate host dsRNA sensors. Its function is as follows. Methyltransferase that mediates mRNA cap 2'-O-ribose methylation to the 5'-cap structure of viral mRNAs. N7-methyl guanosine cap is a prerequisite for binding of nsp16. Therefore plays an essential role in viral mRNAs cap methylation which is essential to evade immune system. The chain is Replicase polyprotein 1ab (rep) from Murine coronavirus (strain 2) (MHV-2).